The following is a 481-amino-acid chain: Proline--tRNA ligase (481 aa).

It belongs to the class-II aminoacyl-tRNA synthetase family. ProS type 3 subfamily. Homodimer.

It is found in the cytoplasm. It carries out the reaction tRNA(Pro) + L-proline + ATP = L-prolyl-tRNA(Pro) + AMP + diphosphate. In terms of biological role, catalyzes the attachment of proline to tRNA(Pro) in a two-step reaction: proline is first activated by ATP to form Pro-AMP and then transferred to the acceptor end of tRNA(Pro). This chain is Proline--tRNA ligase, found in Saccharolobus islandicus (strain M.16.27) (Sulfolobus islandicus).